The following is a 34-amino-acid chain: Photosystem II reaction center protein M (34 aa).

The chain crosses the membrane as a helical span at residues 7-27 (GFIATILFVLVPTVFLLILYI).

This sequence belongs to the PsbM family. As to quaternary structure, PSII is composed of 1 copy each of membrane proteins PsbA, PsbB, PsbC, PsbD, PsbE, PsbF, PsbH, PsbI, PsbJ, PsbK, PsbL, PsbM, PsbT, PsbX, PsbY, PsbZ, Psb30/Ycf12, peripheral proteins PsbO, CyanoQ (PsbQ), PsbU, PsbV and a large number of cofactors. It forms dimeric complexes.

It is found in the cellular thylakoid membrane. Its function is as follows. One of the components of the core complex of photosystem II (PSII). PSII is a light-driven water:plastoquinone oxidoreductase that uses light energy to abstract electrons from H(2)O, generating O(2) and a proton gradient subsequently used for ATP formation. It consists of a core antenna complex that captures photons, and an electron transfer chain that converts photonic excitation into a charge separation. This subunit is found at the monomer-monomer interface. This chain is Photosystem II reaction center protein M, found in Picosynechococcus sp. (strain ATCC 27264 / PCC 7002 / PR-6) (Agmenellum quadruplicatum).